An 832-amino-acid chain; its full sequence is SID1 transmembrane family member 2 (832 aa).

The signal sequence occupies residues 1-18; sequence MIAWRLPLCVLLVASVES. The Extracellular segment spans residues 19 to 293; the sequence is HLGALGPKNV…VSQAVTSEAY (275 aa). N-linked (GlcNAc...) asparagine glycans are attached at residues asparagine 27, asparagine 54, asparagine 60, asparagine 123, asparagine 141, and asparagine 165. Residues 294-314 traverse the membrane as a helical segment; it reads VGGMLFCLGIFLSFYLLTVLL. Residues 315–447 are Cytoplasmic-facing; that stretch reads ACWENWRQRK…DKRVLRKKYQ (133 aa). Serine 401, serine 403, and serine 404 each carry phosphoserine. Residues 448-468 traverse the membrane as a helical segment; the sequence is IYFWNIATIAVFYALPVVQLV. The Extracellular portion of the chain corresponds to 469–499; the sequence is ITYQTVVNVTGNQDICYYNFLCAHPLGNLSA. 2 N-linked (GlcNAc...) asparagine glycosylation sites follow: asparagine 476 and asparagine 496. A helical transmembrane segment spans residues 500-520; sequence FNNILSNLGYILLGLLFLLII. At 521–546 the chain is on the cytoplasmic side; it reads LQREINHNRALLRNDLYALECGIPKH. A helical membrane pass occupies residues 547-567; sequence FGLFYAMGTALMMEGLLSACY. The Extracellular portion of the chain corresponds to 568–605; sequence HVCPNYTNFQFDTSFMYMIAGLCMLKLYQKRHPDINAS. Residues asparagine 572 and asparagine 603 are each glycosylated (N-linked (GlcNAc...) asparagine). Residues 606-626 form a helical membrane-spanning segment; sequence AYSAYACLAIVIFFSVLGVVF. Residues 627–631 lie on the Cytoplasmic side of the membrane; that stretch reads GKGNT. The helical transmembrane segment at 632–652 threads the bilayer; the sequence is AFWIVFSVIHIISTLLLSTQL. At 653–688 the chain is on the extracellular side; the sequence is YYMGRWKLDSGIFRRILHVLYTDCIRQCSGPLYTDR. The chain crosses the membrane as a helical span at residues 689–709; that stretch reads MVLLVMGNIINWSLAAYGLIM. The Cytoplasmic segment spans residues 710 to 715; that stretch reads RPNDFA. The chain crosses the membrane as a helical span at residues 716–736; sequence SYLLAIGICNLLLYFAFYIIM. Residues 737–746 are Extracellular-facing; that stretch reads KLRSGERIKL. Residues 747–767 form a helical membrane-spanning segment; that stretch reads IPLLCIVCTSVVWGFALFFFF. Residues 768 to 796 lie on the Cytoplasmic side of the membrane; it reads QGLSTWQKTPAESREHNRDCILLDFFDDH. The helical transmembrane segment at 797 to 817 threads the bilayer; that stretch reads DIWHFLSSIAMFGSFLVLLTL. The Extracellular portion of the chain corresponds to 818–832; it reads DDDLDTVQRDKIYVF.

This sequence belongs to the SID1 family. In terms of assembly, interacts with adapter protein complex 1 (AP-1) and AP-2, but not AP-3 and AP-4. Interacts with LAMP2. Post-translationally, glycosylated. Widely expressed, including in the liver, brain and kidney (at protein level).

It localises to the lysosome membrane. The protein resides in the cell membrane. In terms of biological role, mediates the translocation of RNA and DNA across the lysosomal membrane during RNA and DNA autophagy (RDA), a process in which RNA and DNA is directly imported into lysosomes in an ATP-dependent manner, and degraded. Involved in the uptake of single-stranded oligonucleotides by living cells, a process called gymnosis. In vitro, mediates the uptake of linear DNA more efficiently than that of circular DNA, but exhibits similar uptake efficacy toward RNA and DNA. Binds long double-stranded RNA (dsRNA) (500 - 700 base pairs), but not dsRNA shorter than 100 bp. This Mus musculus (Mouse) protein is SID1 transmembrane family member 2 (Sidt2).